A 733-amino-acid polypeptide reads, in one-letter code: Phosphoribosylformylglycinamidine synthase subunit PurL (733 aa).

Histidine 42 is an active-site residue. ATP is bound by residues tyrosine 45 and lysine 84. Glutamate 86 is a Mg(2+) binding site. Substrate is bound by residues 87–90 (SHNH) and arginine 109. Histidine 88 functions as the Proton acceptor in the catalytic mechanism. Position 110 (aspartate 110) interacts with Mg(2+). Glutamine 233 contacts substrate. Aspartate 261 is a binding site for Mg(2+). 305–307 (ESQ) contacts substrate. The ATP site is built by aspartate 489 and glycine 526. Asparagine 527 lines the Mg(2+) pocket. Serine 529 serves as a coordination point for substrate.

It belongs to the FGAMS family. As to quaternary structure, monomer. Part of the FGAM synthase complex composed of 1 PurL, 1 PurQ and 2 PurS subunits.

Its subcellular location is the cytoplasm. The enzyme catalyses N(2)-formyl-N(1)-(5-phospho-beta-D-ribosyl)glycinamide + L-glutamine + ATP + H2O = 2-formamido-N(1)-(5-O-phospho-beta-D-ribosyl)acetamidine + L-glutamate + ADP + phosphate + H(+). It functions in the pathway purine metabolism; IMP biosynthesis via de novo pathway; 5-amino-1-(5-phospho-D-ribosyl)imidazole from N(2)-formyl-N(1)-(5-phospho-D-ribosyl)glycinamide: step 1/2. In terms of biological role, part of the phosphoribosylformylglycinamidine synthase complex involved in the purines biosynthetic pathway. Catalyzes the ATP-dependent conversion of formylglycinamide ribonucleotide (FGAR) and glutamine to yield formylglycinamidine ribonucleotide (FGAM) and glutamate. The FGAM synthase complex is composed of three subunits. PurQ produces an ammonia molecule by converting glutamine to glutamate. PurL transfers the ammonia molecule to FGAR to form FGAM in an ATP-dependent manner. PurS interacts with PurQ and PurL and is thought to assist in the transfer of the ammonia molecule from PurQ to PurL. This is Phosphoribosylformylglycinamidine synthase subunit PurL from Moorella thermoacetica (strain ATCC 39073 / JCM 9320).